The chain runs to 243 residues: UDP-2,3-diacylglucosamine hydrolase (243 aa).

Residues Asp8, His10, Asp41, Asn79, and His114 each contribute to the Mn(2+) site. Residue Asn79–Arg80 coordinates substrate. Residues Asp122, Lys164, Lys167, and His195 each contribute to the substrate site. His195 and His197 together coordinate Mn(2+).

This sequence belongs to the LpxH family. Requires Mn(2+) as cofactor.

Its subcellular location is the cell inner membrane. The enzyme catalyses UDP-2-N,3-O-bis[(3R)-3-hydroxytetradecanoyl]-alpha-D-glucosamine + H2O = 2-N,3-O-bis[(3R)-3-hydroxytetradecanoyl]-alpha-D-glucosaminyl 1-phosphate + UMP + 2 H(+). It participates in glycolipid biosynthesis; lipid IV(A) biosynthesis; lipid IV(A) from (3R)-3-hydroxytetradecanoyl-[acyl-carrier-protein] and UDP-N-acetyl-alpha-D-glucosamine: step 4/6. Functionally, hydrolyzes the pyrophosphate bond of UDP-2,3-diacylglucosamine to yield 2,3-diacylglucosamine 1-phosphate (lipid X) and UMP by catalyzing the attack of water at the alpha-P atom. Involved in the biosynthesis of lipid A, a phosphorylated glycolipid that anchors the lipopolysaccharide to the outer membrane of the cell. The protein is UDP-2,3-diacylglucosamine hydrolase of Vibrio vulnificus (strain YJ016).